The primary structure comprises 154 residues: UPF0225 protein YpsIP31758_1970 (154 aa).

The protein belongs to the UPF0225 family.

This chain is UPF0225 protein YpsIP31758_1970, found in Yersinia pseudotuberculosis serotype O:1b (strain IP 31758).